We begin with the raw amino-acid sequence, 410 residues long: Chloride intracellular channel protein 5 (410 aa).

Residues 191 to 194 (CPFS) carry the G-site motif. A helical membrane pass occupies residues 193 to 213 (FSQRLFMILWLKGVVFNVTTV). Positions 260 to 400 (YPKLAAKHRE…AADSEIELAY (141 aa)) constitute a GST C-terminal domain.

Belongs to the chloride channel CLIC family. Component of a multimeric complex consisting of several cytoskeletal proteins, including actin, ezrin, alpha-actinin, gelsolin, and IQGAP1. Interacts with AKAP9. Interacts with TPRN. TPRN, CLIC5 and PTPQR form concentric rings at the base of stereocilia and may form a complex. Interacts with EZR, MYO6 and RDX; the proteins may work together as a complex to stabilize linkages between the plasma membrane and subjacent actin cytoskeleton at the stereocilium base. Widely expressed in both fetal and adult human tissues. Isoform 1 is expressed in renal glomeruli endothelial cells and podocytes (at protein level).

The protein localises to the cytoplasm. It localises to the cytoskeleton. The protein resides in the cell cortex. It is found in the membrane. Its subcellular location is the apical cell membrane. The protein localises to the mitochondrion. It localises to the cell projection. The protein resides in the stereocilium. It is found in the golgi apparatus. Its subcellular location is the microtubule organizing center. The protein localises to the centrosome. The catalysed reaction is chloride(in) = chloride(out). The enzyme catalyses Na(+)(in) = Na(+)(out). It carries out the reaction K(+)(in) = K(+)(out). With respect to regulation, inhibited by F-actin. Its function is as follows. In the soluble state, catalyzes glutaredoxin-like thiol disulfide exchange reactions with reduced glutathione as electron donor. Can insert into membranes and form non-selective ion channels almost equally permeable to Na(+), K(+) and Cl(-). Required for normal hearing. It is necessary for the formation of stereocilia in the inner ear and normal development of the organ of Corti. May play a role in the regulation of transepithelial ion absorption and secretion. Is required for the development and/or maintenance of the proper glomerular endothelial cell and podocyte architecture. Plays a role in formation of the lens suture in the eye, which is important for normal optical properties of the lens. The sequence is that of Chloride intracellular channel protein 5 from Homo sapiens (Human).